The chain runs to 364 residues: Beta-parvin (364 aa).

Residues 1–57 (MSSAPRSPTPRPRRMKKDESFLGKLGGTLARKRRAREVSDLQEEGKNAINSPMSPAL) are disordered. Ser-7 is subject to Phosphoserine. Positions 36–46 (REVSDLQEEGK) are enriched in basic and acidic residues. The residue at position 54 (Ser-54) is a Phosphoserine. Calponin-homology (CH) domains follow at residues 87 to 194 (KELV…MHFR) and 254 to 361 (SVVK…TKYK).

This sequence belongs to the parvin family. In terms of assembly, interacts with DYSF. Interacts with ILK, ARHGEF6, PXN (via LD motifs), ACTN2 and actin. Expressed predominantly in heart and skeletal muscle.

It localises to the cell junction. It is found in the focal adhesion. Its subcellular location is the cell membrane. The protein resides in the cytoplasm. The protein localises to the cytoskeleton. It localises to the cell projection. It is found in the lamellipodium. Its subcellular location is the myofibril. The protein resides in the sarcomere. The protein localises to the z line. Its function is as follows. Adapter protein that plays a role in integrin signaling via ILK and in activation of the GTPases CDC42 and RAC1 by guanine exchange factors, such as ARHGEF6. Is involved in the reorganization of the actin cytoskeleton and formation of lamellipodia. Plays a role in cell adhesion, cell spreading, establishment or maintenance of cell polarity, and cell migration. In Homo sapiens (Human), this protein is Beta-parvin (PARVB).